Here is a 305-residue protein sequence, read N- to C-terminus: Aspartate carbamoyltransferase catalytic subunit (305 aa).

Arg-52 and Thr-53 together coordinate carbamoyl phosphate. Residue Lys-80 participates in L-aspartate binding. Carbamoyl phosphate contacts are provided by Arg-102, His-132, and Gln-135. 2 residues coordinate L-aspartate: Arg-165 and Arg-217. Residues Ala-258 and Pro-259 each contribute to the carbamoyl phosphate site.

Belongs to the aspartate/ornithine carbamoyltransferase superfamily. ATCase family. In terms of assembly, heterododecamer (2C3:3R2) of six catalytic PyrB chains organized as two trimers (C3), and six regulatory PyrI chains organized as three dimers (R2).

The catalysed reaction is carbamoyl phosphate + L-aspartate = N-carbamoyl-L-aspartate + phosphate + H(+). It participates in pyrimidine metabolism; UMP biosynthesis via de novo pathway; (S)-dihydroorotate from bicarbonate: step 2/3. Functionally, catalyzes the condensation of carbamoyl phosphate and aspartate to form carbamoyl aspartate and inorganic phosphate, the committed step in the de novo pyrimidine nucleotide biosynthesis pathway. The protein is Aspartate carbamoyltransferase catalytic subunit of Latilactobacillus sakei subsp. sakei (strain 23K) (Lactobacillus sakei subsp. sakei).